We begin with the raw amino-acid sequence, 125 residues long: Mitochondrial import inner membrane translocase subunit tim16-A (125 aa).

Residues 58–110 are J-like; the sequence is EAQQILNVSKLTPEEIQKNYEHLFKVNDKGLGGSFYLQSKVVRAKERLDQEME.

The protein belongs to the TIM16/PAM16 family. Probable component of the PAM complex at least composed of 1 mitochondrial HSP70 protein, 1 GRPE, 1 TIMM44, 1 TIMM16/PAM16 and 1 TIMM14. Associates with the TIM23 complex.

Its subcellular location is the mitochondrion inner membrane. Its function is as follows. Regulates ATP-dependent protein translocation into the mitochondrial matrix. The protein is Mitochondrial import inner membrane translocase subunit tim16-A (pam16-a) of Xenopus laevis (African clawed frog).